Reading from the N-terminus, the 304-residue chain is Small ribosomal subunit biogenesis GTPase RsgA (304 aa).

The CP-type G domain occupies 78-237 (HSFLTRPPVA…VADTPGFNRP (160 aa)). Residues 127 to 130 (TKTD) and 179 to 187 (GPSGVGKSS) contribute to the GTP site. 4 residues coordinate Zn(2+): Cys262, Cys267, His269, and Cys275.

This sequence belongs to the TRAFAC class YlqF/YawG GTPase family. RsgA subfamily. Monomer. Associates with 30S ribosomal subunit, binds 16S rRNA. Requires Zn(2+) as cofactor.

It localises to the cytoplasm. In terms of biological role, one of several proteins that assist in the late maturation steps of the functional core of the 30S ribosomal subunit. Helps release RbfA from mature subunits. May play a role in the assembly of ribosomal proteins into the subunit. Circularly permuted GTPase that catalyzes slow GTP hydrolysis, GTPase activity is stimulated by the 30S ribosomal subunit. This Synechococcus sp. (strain CC9605) protein is Small ribosomal subunit biogenesis GTPase RsgA.